Reading from the N-terminus, the 187-residue chain is GTP cyclohydrolase 1 (187 aa).

Residues Cys-76, His-79, and Cys-148 each coordinate Zn(2+).

It belongs to the GTP cyclohydrolase I family. In terms of assembly, homomer.

It carries out the reaction GTP + H2O = 7,8-dihydroneopterin 3'-triphosphate + formate + H(+). The protein operates within cofactor biosynthesis; 7,8-dihydroneopterin triphosphate biosynthesis; 7,8-dihydroneopterin triphosphate from GTP: step 1/1. This Streptococcus gordonii (strain Challis / ATCC 35105 / BCRC 15272 / CH1 / DL1 / V288) protein is GTP cyclohydrolase 1.